The primary structure comprises 90 residues: Small ribosomal subunit protein bS20 (90 aa).

This sequence belongs to the bacterial ribosomal protein bS20 family.

In terms of biological role, binds directly to 16S ribosomal RNA. This Mesomycoplasma hyopneumoniae (strain 232) (Mycoplasma hyopneumoniae) protein is Small ribosomal subunit protein bS20.